The sequence spans 353 residues: Phosphate acyltransferase (353 aa).

This sequence belongs to the PlsX family. Homodimer. Probably interacts with PlsY.

It localises to the cytoplasm. The catalysed reaction is a fatty acyl-[ACP] + phosphate = an acyl phosphate + holo-[ACP]. Its pathway is lipid metabolism; phospholipid metabolism. Functionally, catalyzes the reversible formation of acyl-phosphate (acyl-PO(4)) from acyl-[acyl-carrier-protein] (acyl-ACP). This enzyme utilizes acyl-ACP as fatty acyl donor, but not acyl-CoA. In Rhodopseudomonas palustris (strain BisB18), this protein is Phosphate acyltransferase.